A 480-amino-acid polypeptide reads, in one-letter code: Aspartyl/glutamyl-tRNA(Asn/Gln) amidotransferase subunit B (480 aa).

This sequence belongs to the GatB/GatE family. GatB subfamily. As to quaternary structure, heterotrimer of A, B and C subunits.

The enzyme catalyses L-glutamyl-tRNA(Gln) + L-glutamine + ATP + H2O = L-glutaminyl-tRNA(Gln) + L-glutamate + ADP + phosphate + H(+). It carries out the reaction L-aspartyl-tRNA(Asn) + L-glutamine + ATP + H2O = L-asparaginyl-tRNA(Asn) + L-glutamate + ADP + phosphate + 2 H(+). Allows the formation of correctly charged Asn-tRNA(Asn) or Gln-tRNA(Gln) through the transamidation of misacylated Asp-tRNA(Asn) or Glu-tRNA(Gln) in organisms which lack either or both of asparaginyl-tRNA or glutaminyl-tRNA synthetases. The reaction takes place in the presence of glutamine and ATP through an activated phospho-Asp-tRNA(Asn) or phospho-Glu-tRNA(Gln). The chain is Aspartyl/glutamyl-tRNA(Asn/Gln) amidotransferase subunit B from Streptococcus thermophilus (strain ATCC BAA-250 / LMG 18311).